A 292-amino-acid polypeptide reads, in one-letter code: Aquaporin-3 (292 aa).

Over 1 to 24 (MGRQKELVSRCGEMLHIRYRLLRQ) the chain is Cytoplasmic. A helical transmembrane segment spans residues 25-42 (ALAECLGTLILVMFGCGS). Residues 43 to 56 (VAQVVLSRGTHGGF) are Extracellular-facing. Residues 57–74 (LTINLAFGFAVTLGILIA) traverse the membrane as a helical segment. Over 75-78 (GQVS) the chain is Cytoplasmic. Residues 79–92 (GAHLNPAVTFAMCF) constitute an intramembrane region (discontinuously helical). Positions 83 to 85 (NPA) match the NPA 1 motif. Topologically, residues 93–100 (LAREPWIK) are cytoplasmic. A helical membrane pass occupies residues 101 to 121 (LPIYTLAQTLGAFLGAGIVFG). At 122–159 (LYYDAIWHFADNQLFVSGPNGTAGIFATYPSGHLDMIN) the chain is on the extracellular side. Asparagine 141 is a glycosylation site (N-linked (GlcNAc...) asparagine). The chain crosses the membrane as a helical span at residues 160–177 (GFFDQFIGTASLIVCVLA). The Cytoplasmic portion of the chain corresponds to 178–189 (IVDPYNNPVPRG). Residues 190-206 (LEAFTVGLVVLVIGTSM) form a helical membrane-spanning segment. Over 207 to 210 (GFNS) the chain is Extracellular. Positions 211-224 (GYAVNPARDFGPRL) form an intramembrane region, discontinuously helical. Residues 215–217 (NPA) carry the NPA 2 motif. Residues 225 to 242 (FTALAGWGSAVFTTGQHW) are Extracellular-facing. The helical transmembrane segment at 243 to 264 (WWVPIVSPLLGSIAGVFVYQLM) threads the bilayer. Topologically, residues 265 to 292 (IGCHLEQPPPSNEEENVKLAHVKHKEQI) are cytoplasmic.

This sequence belongs to the MIP/aquaporin (TC 1.A.8) family. Homotetramer; each monomer provides an independent glycerol/water pore. Could also exist in other oligomeric states. Widely expressed in epithelial cells of kidney (collecting ducts) and airways, in keratinocytes, immature dendritic cells and erythrocytes. Isoform 2 is not detectable in erythrocytes at the protein level.

The protein resides in the cell membrane. It is found in the basolateral cell membrane. It carries out the reaction glycerol(in) = glycerol(out). The enzyme catalyses H2O(in) = H2O(out). It catalyses the reaction H2O2(out) = H2O2(in). The catalysed reaction is urea(in) = urea(out). Glycerol transport is regulated by pH, with the porin being permeable to glycerol at pH 7.4 but not at pH 5.5. Water permeability, however, is not influenced by pH. Aquaglyceroporins form homotetrameric transmembrane channels, with each monomer independently mediating glycerol and water transport across the plasma membrane along their osmotic gradient. Could also be permeable to urea. Also participates in cell permeability to H2O2 and H2O2-mediated signaling. In skin, transports glycerol to the epidermis and stratum corneum, where it maintains hydration, elasticity, and supports lipid biosynthesis for barrier repair. In kidney, contributes to the reabsorption of water, helping the body maintain proper fluid balance. In Homo sapiens (Human), this protein is Aquaporin-3.